The sequence spans 59 residues: Cecropin-B2 (59 aa).

A signal peptide spans 1–23 (MNFNKLFLIVILAALLLLGQTEA). A Leucine amide modification is found at L57.

This sequence belongs to the cecropin family.

The protein resides in the secreted. Functionally, cecropins have lytic and antibacterial activity against several Gram-positive and Gram-negative bacteria. The chain is Cecropin-B2 (CECB2) from Culex pipiens pipiens (Northern house mosquito).